The chain runs to 470 residues: Nuclear receptor ROR-beta (470 aa).

Positions 18–93 (VIPCKICGDK…LGMSRDAVKF (76 aa)) form a DNA-binding region, nuclear receptor. NR C4-type zinc fingers lie at residues 21–41 (CKIC…CEGC) and 57–81 (CPRQ…LQKC). The segment covering 104–117 (LYAEVQKHQQRLQE) has biased composition (basic and acidic residues). The segment at 104–127 (LYAEVQKHQQRLQEQRQQQSGEAE) is disordered. In terms of domain architecture, NR LBD spans 222 to 460 (EIDRIAQNII…TLFPPLYKEL (239 aa)). Residues 456–461 (LYKELF) carry the AF-2 motif.

Belongs to the nuclear hormone receptor family. NR1 subfamily. As to quaternary structure, monomer. Interacts with CRX. In terms of tissue distribution, expressed in inner and outer neuroblastic layer as well as in the ganglion cell layer of the developing retina. Expressed in bone marrow osteoprogenitor cells.

It is found in the nucleus. It localises to the nucleoplasm. Functionally, nuclear receptor that binds DNA as a monomer to ROR response elements (RORE) containing a single core motif half-site 5'-AGGTCA-3' preceded by a short A-T-rich sequence. Considered to have intrinsic transcriptional activity, have some natural ligands such as all-trans retinoic acid (ATRA) and other retinoids which act as inverse agonists repressing the transcriptional activity. Required for normal postnatal development of rod and cone photoreceptor cells. Modulates rod photoreceptors differentiation at least by inducing the transcription factor NRL-mediated pathway. In cone photoreceptor cells, regulates transcription of OPN1SW. Involved in the regulation of the period length and stability of the circadian rhythm. May control cytoarchitectural patterning of neocortical neurons during development. May act in a dose-dependent manner to regulate barrel formation upon innervation of layer IV neurons by thalamocortical axons. May play a role in the suppression of osteoblastic differentiation through the inhibition of RUNX2 transcriptional activity. In terms of biological role, isoform 1 is critical for hindlimb motor control and for the differentiation of amacrine and horizontal cells in the retina. Regulates the expression of PTF1A synergistically with FOXN4. The protein is Nuclear receptor ROR-beta (Rorb) of Mus musculus (Mouse).